We begin with the raw amino-acid sequence, 842 residues long: Valine--tRNA ligase (842 aa).

Residues 86–96 (PFTSGELHMGH) carry the 'HIGH' region motif. Residues 572–576 (RMSKS) carry the 'KMSKS' region motif. Lys575 contributes to the ATP binding site.

This sequence belongs to the class-I aminoacyl-tRNA synthetase family. ValS type 2 subfamily.

Its subcellular location is the cytoplasm. The catalysed reaction is tRNA(Val) + L-valine + ATP = L-valyl-tRNA(Val) + AMP + diphosphate. Its function is as follows. Catalyzes the attachment of valine to tRNA(Val). As ValRS can inadvertently accommodate and process structurally similar amino acids such as threonine, to avoid such errors, it has a 'posttransfer' editing activity that hydrolyzes mischarged Thr-tRNA(Val) in a tRNA-dependent manner. This chain is Valine--tRNA ligase, found in Saccharolobus solfataricus (strain ATCC 35092 / DSM 1617 / JCM 11322 / P2) (Sulfolobus solfataricus).